The chain runs to 832 residues: Elongation factor 2 (832 aa).

A tr-type G domain is found at 17–336; it reads HNIRNMSVIA…MIVTHLPSPA (320 aa). 26–33 lines the GTP pocket; it reads AHVDHGKS. Residues T57 and T59 each carry the phosphothreonine modification. Residues 152-155 and 207-209 each bind GTP; these read NKVD and SGL. The disordered stretch occupies residues 580 to 608; the sequence is AEPLPDGLTDDIEEGKVSPRDDPKERSNL. The span at 593–608 shows a compositional bias: basic and acidic residues; sequence EGKVSPRDDPKERSNL. H689 is subject to Diphthamide.

It belongs to the TRAFAC class translation factor GTPase superfamily. Classic translation factor GTPase family. EF-G/EF-2 subfamily.

Its subcellular location is the cytoplasm. It catalyses the reaction GTP + H2O = GDP + phosphate + H(+). Catalyzes the GTP-dependent ribosomal translocation step during translation elongation. During this step, the ribosome changes from the pre-translocational (PRE) to the post-translocational (POST) state as the newly formed A-site-bound peptidyl-tRNA and P-site-bound deacylated tRNA move to the P and E sites, respectively. Catalyzes the coordinated movement of the two tRNA molecules, the mRNA and conformational changes in the ribosome. The chain is Elongation factor 2 from Cryptosporidium parvum.